The chain runs to 617 residues: 1-deoxy-D-xylulose-5-phosphate synthase (617 aa).

Thiamine diphosphate contacts are provided by residues His-77 and 118-120 (GHS). Residue Asp-149 participates in Mg(2+) binding. Thiamine diphosphate is bound by residues 150–151 (GA), Asn-178, Tyr-287, and Glu-368. Asn-178 lines the Mg(2+) pocket.

Belongs to the transketolase family. DXPS subfamily. In terms of assembly, homodimer. The cofactor is Mg(2+). Thiamine diphosphate serves as cofactor.

The catalysed reaction is D-glyceraldehyde 3-phosphate + pyruvate + H(+) = 1-deoxy-D-xylulose 5-phosphate + CO2. It functions in the pathway metabolic intermediate biosynthesis; 1-deoxy-D-xylulose 5-phosphate biosynthesis; 1-deoxy-D-xylulose 5-phosphate from D-glyceraldehyde 3-phosphate and pyruvate: step 1/1. In terms of biological role, catalyzes the acyloin condensation reaction between C atoms 2 and 3 of pyruvate and glyceraldehyde 3-phosphate to yield 1-deoxy-D-xylulose-5-phosphate (DXP). This Haemophilus ducreyi (strain 35000HP / ATCC 700724) protein is 1-deoxy-D-xylulose-5-phosphate synthase.